A 107-amino-acid polypeptide reads, in one-letter code: Large ribosomal subunit protein uL24 (107 aa).

This sequence belongs to the universal ribosomal protein uL24 family. Part of the 50S ribosomal subunit.

In terms of biological role, one of two assembly initiator proteins, it binds directly to the 5'-end of the 23S rRNA, where it nucleates assembly of the 50S subunit. Functionally, one of the proteins that surrounds the polypeptide exit tunnel on the outside of the subunit. This Pelotomaculum thermopropionicum (strain DSM 13744 / JCM 10971 / SI) protein is Large ribosomal subunit protein uL24.